The following is a 211-amino-acid chain: Thiamine-phosphate synthase (211 aa).

4-amino-2-methyl-5-(diphosphooxymethyl)pyrimidine is bound by residues 37–41 and Asn-69; that span reads QLRIK. Asp-70 and Asp-89 together coordinate Mg(2+). Ser-108 provides a ligand contact to 4-amino-2-methyl-5-(diphosphooxymethyl)pyrimidine. 134–136 lines the 2-[(2R,5Z)-2-carboxy-4-methylthiazol-5(2H)-ylidene]ethyl phosphate pocket; the sequence is TQT. Residue Lys-137 participates in 4-amino-2-methyl-5-(diphosphooxymethyl)pyrimidine binding. 2-[(2R,5Z)-2-carboxy-4-methylthiazol-5(2H)-ylidene]ethyl phosphate contacts are provided by residues Gly-166 and 186–187; that span reads VS.

This sequence belongs to the thiamine-phosphate synthase family. It depends on Mg(2+) as a cofactor.

It carries out the reaction 2-[(2R,5Z)-2-carboxy-4-methylthiazol-5(2H)-ylidene]ethyl phosphate + 4-amino-2-methyl-5-(diphosphooxymethyl)pyrimidine + 2 H(+) = thiamine phosphate + CO2 + diphosphate. It catalyses the reaction 2-(2-carboxy-4-methylthiazol-5-yl)ethyl phosphate + 4-amino-2-methyl-5-(diphosphooxymethyl)pyrimidine + 2 H(+) = thiamine phosphate + CO2 + diphosphate. The enzyme catalyses 4-methyl-5-(2-phosphooxyethyl)-thiazole + 4-amino-2-methyl-5-(diphosphooxymethyl)pyrimidine + H(+) = thiamine phosphate + diphosphate. Its pathway is cofactor biosynthesis; thiamine diphosphate biosynthesis; thiamine phosphate from 4-amino-2-methyl-5-diphosphomethylpyrimidine and 4-methyl-5-(2-phosphoethyl)-thiazole: step 1/1. Its function is as follows. Condenses 4-methyl-5-(beta-hydroxyethyl)thiazole monophosphate (THZ-P) and 2-methyl-4-amino-5-hydroxymethyl pyrimidine pyrophosphate (HMP-PP) to form thiamine monophosphate (TMP). This is Thiamine-phosphate synthase from Salmonella paratyphi B (strain ATCC BAA-1250 / SPB7).